A 184-amino-acid chain; its full sequence is Mediator of RNA polymerase II transcription subunit 30 (184 aa).

Residues 136-179 adopt a coiled-coil conformation; that stretch reads SQLRFASEEKREILEVNKKLKQKNQQLKQIMDQLRNLIWDINSM.

Belongs to the Mediator complex subunit 30 family. As to quaternary structure, component of the Mediator complex.

It localises to the nucleus. Its function is as follows. Component of the Mediator complex, a coactivator involved in the regulated transcription of nearly all RNA polymerase II-dependent genes. Mediator functions as a bridge to convey information from gene-specific regulatory proteins to the basal RNA polymerase II transcription machinery. Mediator is recruited to promoters by direct interactions with regulatory proteins and serves as a scaffold for the assembly of a functional preinitiation complex with RNA polymerase II and the general transcription factors. The polypeptide is Mediator of RNA polymerase II transcription subunit 30 (med30) (Xenopus laevis (African clawed frog)).